The following is a 101-amino-acid chain: Small ribosomal subunit protein uS14 (101 aa).

Belongs to the universal ribosomal protein uS14 family. In terms of assembly, part of the 30S ribosomal subunit. Contacts proteins S3 and S10.

Its function is as follows. Binds 16S rRNA, required for the assembly of 30S particles and may also be responsible for determining the conformation of the 16S rRNA at the A site. In Vibrio vulnificus (strain CMCP6), this protein is Small ribosomal subunit protein uS14.